The primary structure comprises 189 residues: UPF0301 protein PSEEN5058 (189 aa).

Belongs to the UPF0301 (AlgH) family.

This Pseudomonas entomophila (strain L48) protein is UPF0301 protein PSEEN5058.